A 428-amino-acid polypeptide reads, in one-letter code: Beta-1,3-galactosyl-O-glycosyl-glycoprotein beta-1,6-N-acetylglucosaminyltransferase (428 aa).

The Cytoplasmic portion of the chain corresponds to 1 to 9 (MLRTLLRRR). The interval 5–9 (LLRRR) is mediates interaction with GOLPH3 and is necessary and sufficient for localization to the Golgi. A helical; Signal-anchor for type II membrane protein transmembrane segment spans residues 10–32 (LFSYPTKYYFMVLVLSLITFSVL). Positions 33–121 (RIHQKPEFVS…EPLSKEEAEF (89 aa)) are stem region. The Lumenal portion of the chain corresponds to 33–428 (RIHQKPEFVS…RHKALETLKH (396 aa)). N-linked (GlcNAc...) asparagine glycans are attached at residues Asn58 and Asn95. Cystine bridges form between Cys59-Cys413, Cys100-Cys172, Cys151-Cys199, and Cys372-Cys381. The catalytic stretch occupies residues 122–428 (PIAYSIVVHH…RHKALETLKH (307 aa)). Residues 128–130 (VVH), 155–157 (DTK), and Tyr187 contribute to the UDP-N-acetyl-alpha-D-glucosamine site. A glycoprotein-binding residues include Glu243, Lys251, Arg254, Glu320, Lys341, and Tyr358. Glu320 acts as the Nucleophile in catalysis. UDP-N-acetyl-alpha-D-glucosamine is bound by residues Arg378 and Lys401.

Belongs to the glycosyltransferase 14 family. In terms of assembly, interacts with GOLPH3; may control GCNT1 retention in the Golgi. As to expression, highly expressed in activated T-lymphocytes and myeloid cells.

The protein resides in the golgi apparatus membrane. The catalysed reaction is a 3-O-[beta-D-galactosyl-(1-&gt;3)-N-acetyl-alpha-D-galactosaminyl]-L-seryl-[protein] + UDP-N-acetyl-alpha-D-glucosamine = 3-O-{beta-D-galactosyl-(1-&gt;3)-[N-acetyl-beta-D-glucosaminyl-(1-&gt;6)]-N-acetyl-alpha-D-galactosaminyl}-L-seryl-[protein] + UDP + H(+). The enzyme catalyses a 3-O-[beta-D-galactosyl-(1-&gt;3)-N-acetyl-alpha-D-galactosaminyl]-L-threonyl-[protein] + UDP-N-acetyl-alpha-D-glucosamine = a 3-O-{beta-D-galactosyl-(1-&gt;3)-[N-acetyl-beta-D-glucosaminyl-(1-&gt;6)]-N-acetyl-alpha-D-galactosaminyl}-L-threonyl-[protein] + UDP + H(+). It catalyses the reaction a globoside GalGb4Cer + UDP-N-acetyl-alpha-D-glucosamine = a globoside GlcNAc-(beta1-&gt;6)-GalGb4Cer + UDP + H(+). It carries out the reaction a ganglioside GA1 + UDP-N-acetyl-alpha-D-glucosamine = a ganglioside beta-D-GlcNAc-(1-&gt;6)-GA1 + UDP + H(+). The protein operates within protein modification; protein glycosylation. Its pathway is glycolipid biosynthesis. Functionally, glycosyltransferase that catalyzes the transfer of an N-acetylglucosamine (GlcNAc) moiety in beta1-6 linkage from UDP-GlcNAc onto mucin-type core 1 O-glycan to form the branched mucin-type core 2 O-glycan. The catalysis is metal ion-independent and occurs with inversion of the anomeric configuration of sugar donor. Selectively involved in synthesis of mucin-type core 2 O-glycans that serve as scaffolds for the display of selectin ligand sialyl Lewis X epitope by myeloid cells, with an impact on homeostasis and recruitment to inflammatory sites. Can also act on glycolipid substrates. Transfers GlcNAc moiety to GalGb4Cer globosides in a reaction step to the synthesis of stage-specific embryonic antigen 1 (SSEA-1) determinant. Can use Galbeta1-3GalNAcalpha1- and Galbeta1-3GalNAcbeta1- oligosaccharide derivatives as acceptor substrates. This is Beta-1,3-galactosyl-O-glycosyl-glycoprotein beta-1,6-N-acetylglucosaminyltransferase (GCNT1) from Homo sapiens (Human).